The following is a 165-amino-acid chain: Endoribonuclease YbeY (165 aa).

3 residues coordinate Zn(2+): histidine 126, histidine 130, and histidine 136.

This sequence belongs to the endoribonuclease YbeY family. The cofactor is Zn(2+).

It localises to the cytoplasm. Its function is as follows. Single strand-specific metallo-endoribonuclease involved in late-stage 70S ribosome quality control and in maturation of the 3' terminus of the 16S rRNA. The chain is Endoribonuclease YbeY from Ruegeria pomeroyi (strain ATCC 700808 / DSM 15171 / DSS-3) (Silicibacter pomeroyi).